The following is a 358-amino-acid chain: Oxidase FUB9 (358 aa).

Positions 6 to 350 (SSKPQIFSIQ…SPAHLSILNA (345 aa)) constitute an FMN hydroxy acid dehydrogenase domain. Residue Y32 coordinates a 2-oxocarboxylate. Residues S114, Q138, and T166 each contribute to the FMN site. Residue R175 participates in a 2-oxocarboxylate binding. K221 contacts FMN. H245 serves as the catalytic Proton acceptor. R248 contacts a 2-oxocarboxylate. FMN-binding positions include 276 to 280 (DGGFR) and 299 to 300 (GR).

It belongs to the FMN-dependent alpha-hydroxy acid dehydrogenase family. The cofactor is FMN.

It participates in mycotoxin biosynthesis. Its function is as follows. Oxidase; part of the gene cluster that mediates the biosynthesis of fusaric acid, a mycotoxin with low to moderate toxicity to animals and humans, but with high phytotoxic properties. L-aspartate is suggested as fusaric acid amino acid precursor that is activated and further processed to O-acetyl-L-homoserine by cluster enzymes aspartate kinase FUB3 and homoserine O-acetyltransferase FUB5, as well as enzymes of the primary metabolism. The polyketide synthase (PKS) FUB1 generates the triketide trans-2-hexenal which is presumptively released by the hydrolase FUB4 and linked to the NRPS-bound amino acid precursor by NAD(P)-dependent dehydrogenase FUB6. FUB1, FUB4, and the non-canonical NRPS Fub8 may form an enzyme complex. Further processing of the NRPS-bound intermediate might be carried out by FUB6 and the sulfhydrylase FUB7, enabling a spontaneous electrocyclization to close the carbon backbone of fusaric acid. Dihydrofusaric acid is likely to be released via reduction by the thioester reductase (TR) domain of FUB8 whereupon the final oxidation to fusaric acid may (also) be performed by the FMN-dependent dehydrogenase FUB9. This is Oxidase FUB9 from Gibberella fujikuroi (strain CBS 195.34 / IMI 58289 / NRRL A-6831) (Bakanae and foot rot disease fungus).